Reading from the N-terminus, the 206-residue chain is RNA pyrophosphohydrolase (206 aa).

A Nudix hydrolase domain is found at 6–150; it reads GYRPNVGIVI…KRDVYRKVMK (145 aa). Residues 38–59 carry the Nudix box motif; it reads GGINEGENIETAMYRELYEEVG. The span at 162–191 shows a compositional bias: basic and acidic residues; it reads KPETVEKPRVERTEKRDFQKRDNQKREFRK. A disordered region spans residues 162-206; the sequence is KPETVEKPRVERTEKRDFQKRDNQKREFRKSARMWNNSHQKGKAQ.

Belongs to the Nudix hydrolase family. RppH subfamily. A divalent metal cation serves as cofactor.

Its function is as follows. Accelerates the degradation of transcripts by removing pyrophosphate from the 5'-end of triphosphorylated RNA, leading to a more labile monophosphorylated state that can stimulate subsequent ribonuclease cleavage. The sequence is that of RNA pyrophosphohydrolase from Actinobacillus pleuropneumoniae serotype 5b (strain L20).